The primary structure comprises 584 residues: Complement component C8 alpha chain (584 aa).

Residues 1–20 form the signal peptide; it reads MFAVVFFILSLMTCQPGVTA. Positions 21-30 are excised as a propeptide; it reads QEKVNQRVRR. The 54-residue stretch at 38–91 folds into the TSP type-1 1 domain; that stretch reads TCQLSNWSEWTDCFPCQDKKYRHRSLLQPNKFGGTICSGDIWDQASCSSSTTCV. Disulfide bonds link Cys39-Cys74, Cys50-Cys84, Cys53-Cys90, Cys96-Cys108, Cys102-Cys121, Cys115-Cys130, and Cys140-Cys177. The C-linked (Man) tryptophan glycan is linked to Trp44. The 39-residue stretch at 94-132 folds into the LDL-receptor class A domain; it reads AQCGQDFQCKETGRCLKRHLVCNGDQDCLDGSDEDDCED. Leu113, Asn116, Asp118, Asp120, Asp126, and Glu127 together coordinate Ca(2+). Residues 135 to 498 form the MACPF domain; the sequence is AIDEDCSQYE…QYLMEFNACR (364 aa). The next 4 beta stranded transmembrane spans lie at 248 to 256, 259 to 266, 377 to 384, and 390 to 395; these read FGVTIGIGP, SPLLVGVG, GGSLGIQY, and VGGGLS. Cys375 and Cys399 form a disulfide bridge. Asn437 carries an N-linked (GlcNAc...) asparagine glycan. Cystine bridges form between Cys497/Cys544, Cys499/Cys515, Cys502/Cys517, and Cys519/Cys528. The EGF-like domain occupies 499-529; the sequence is CGPCFNNGVPILEGTSCRCQCRLGSLGAACE. The TSP type-1 2 domain occupies 539–583; sequence DGSWSCWSSWSVCRAGIQERRRECDNPAPQNGGASCPGRKVQTQA. 3 C-linked (Man) tryptophan glycosylation sites follow: Trp542, Trp545, and Trp548. Cystine bridges form between Cys551–Cys584 and Cys562–Cys574. The segment at 562-584 is disordered; it reads CDNPAPQNGGASCPGRKVQTQAC.

This sequence belongs to the complement C6/C7/C8/C9 family. As to quaternary structure, heterotrimer of 3 chains: alpha (C8A), beta (C8B) and gamma (C8G); the alpha and gamma chains are disulfide bonded. Component of the membrane attack complex (MAC), composed of complement C5b, C6, C7, C8A, C8B, C8G and multiple copies of the pore-forming subunit C9.

Its subcellular location is the secreted. The protein localises to the target cell membrane. Its activity is regulated as follows. Membrane attack complex (MAC) assembly is inhibited by CD59, thereby protecting self-cells from damage during complement activation. CD59 acts by binding to the beta-haipins of C8 (C8A and C8B), forming an intermolecular beta-sheet that prevents incorporation of the multiple copies of C9 required for complete formation of the osmolytic pore. MAC assembly is also inhibited by clusterin (CLU) chaperones that inhibit polymerization of C9. Functionally, component of the membrane attack complex (MAC), a multiprotein complex activated by the complement cascade, which inserts into a target cell membrane and forms a pore, leading to target cell membrane rupture and cell lysis. The MAC is initiated by proteolytic cleavage of C5 into complement C5b in response to the classical, alternative, lectin and GZMK complement pathways. The complement pathways consist in a cascade of proteins that leads to phagocytosis and breakdown of pathogens and signaling that strengthens the adaptive immune system. C8A, together with C8B and C8G, inserts into the target membrane, but does not form pores by itself. During MAC assembly, associates with C5b, C6 and C7 to form the C5b8 intermediate complex that inserts into the target membrane and traverses the bilayer increasing membrane rigidity. The sequence is that of Complement component C8 alpha chain from Homo sapiens (Human).